The following is a 119-amino-acid chain: Beta-2-microglobulin (119 aa).

The signal sequence occupies residues 1-20 (MARTVATFFLMLVSLACLDA). The region spanning 25–114 (PQVQVYTRHP…VTLKEPKVVT (90 aa)) is the Ig-like C1-type domain. C45 and C100 are disulfide-bonded.

It belongs to the beta-2-microglobulin family. Heterodimer of an alpha chain and a beta chain. Beta-2-microglobulin is the beta-chain of major histocompatibility complex class I molecules.

The protein localises to the secreted. Functionally, component of the class I major histocompatibility complex (MHC). Involved in the presentation of peptide antigens to the immune system. The polypeptide is Beta-2-microglobulin (B2M) (Sigmodon hispidus (Hispid cotton rat)).